Here is a 381-residue protein sequence, read N- to C-terminus: Probable G-protein coupled receptor 34 (381 aa).

Residues M1 to Y61 lie on the Extracellular side of the membrane. N28, N36, and N42 each carry an N-linked (GlcNAc...) asparagine glycan. Residues S62–I82 form a helical membrane-spanning segment. At H83–S88 the chain is on the cytoplasmic side. A helical transmembrane segment spans residues I89–F109. Over R110–K128 the chain is Extracellular. C127 and C204 are oxidised to a cystine. Residues V129–S149 form a helical membrane-spanning segment. At L150–S171 the chain is on the cytoplasmic side. Residues I172 to L192 traverse the membrane as a helical segment. Topologically, residues T193 to E216 are extracellular. Residue N200 is glycosylated (N-linked (GlcNAc...) asparagine). A helical membrane pass occupies residues A217 to S237. The Cytoplasmic segment spans residues Y238–F269. A helical membrane pass occupies residues I270–I290. Residues S291 to E310 are Extracellular-facing. Residue N295 is glycosylated (N-linked (GlcNAc...) asparagine). The chain crosses the membrane as a helical span at residues I311–S331. The Cytoplasmic segment spans residues S332 to T381.

This sequence belongs to the G-protein coupled receptor 1 family.

The protein resides in the cell membrane. G-protein-coupled receptor of lysophosphatidylserine (LysoPS) that plays different roles in immune response. Acts a damage-sensing receptor that triggers tissue repair upon recognition of dying neutrophils. Mechanistically, apoptotic neutrophils release lysophosphatydilserine that are recognized by type 3 innate lymphoid cells (ILC3s) via GPR34, which activates downstream PI3K-AKT and RAS-ERK signaling pathways leading to STAT3 activation and IL-22 production. Plays an important role in microglial function, controlling morphology and phagocytosis. The protein is Probable G-protein coupled receptor 34 (GPR34) of Gorilla gorilla gorilla (Western lowland gorilla).